A 256-amino-acid chain; its full sequence is MTTATDRQAFHARLLEIGKERYHDKHPFHAMLHGGGCTTTQVRAWVINRYYYQSRIPMKDAAFLSRCDDPDMRRAWRSRIEDHDGGVEEGGGIRRWLRLAEAVGLDPAYVGSARGVLPSTRFAVDAYVSFVREKPLLEAVASSLTELFAPKIHSERIAGLLEHYAFADDAALAYFRQRLAEVPRDVEFGLAYVLDHADTREKQDAAAQALTFKTDVLWAQLDALYSAYVTPGRIPPGAWDGREGVIREPRAREAAE.

It belongs to the PqqC family.

It carries out the reaction 6-(2-amino-2-carboxyethyl)-7,8-dioxo-1,2,3,4,7,8-hexahydroquinoline-2,4-dicarboxylate + 3 O2 = pyrroloquinoline quinone + 2 H2O2 + 2 H2O + H(+). It participates in cofactor biosynthesis; pyrroloquinoline quinone biosynthesis. Functionally, ring cyclization and eight-electron oxidation of 3a-(2-amino-2-carboxyethyl)-4,5-dioxo-4,5,6,7,8,9-hexahydroquinoline-7,9-dicarboxylic-acid to PQQ. The chain is Pyrroloquinoline-quinone synthase from Rhizobium meliloti (strain 1021) (Ensifer meliloti).